The sequence spans 172 residues: Large ribosomal subunit protein uL10 (172 aa).

This sequence belongs to the universal ribosomal protein uL10 family. In terms of assembly, part of the ribosomal stalk of the 50S ribosomal subunit. The N-terminus interacts with L11 and the large rRNA to form the base of the stalk. The C-terminus forms an elongated spine to which L12 dimers bind in a sequential fashion forming a multimeric L10(L12)X complex.

In terms of biological role, forms part of the ribosomal stalk, playing a central role in the interaction of the ribosome with GTP-bound translation factors. This chain is Large ribosomal subunit protein uL10, found in Lawsonia intracellularis (strain PHE/MN1-00).